A 97-amino-acid chain; its full sequence is Small ribosomal subunit protein bS6 (97 aa).

This sequence belongs to the bacterial ribosomal protein bS6 family.

In terms of biological role, binds together with bS18 to 16S ribosomal RNA. The polypeptide is Small ribosomal subunit protein bS6 (Lactococcus lactis subsp. cremoris (strain MG1363)).